Consider the following 93-residue polypeptide: YcgL domain-containing protein VIBHAR_01387 (93 aa).

Residues 1 to 84 (MLCSIYKSSR…PPENLLEKYK (84 aa)) enclose the YcgL domain.

The protein is YcgL domain-containing protein VIBHAR_01387 of Vibrio campbellii (strain ATCC BAA-1116).